Reading from the N-terminus, the 188-residue chain is Nicotinamide-nucleotide adenylyltransferase (188 aa).

Residues 166 to 188 (SDSLERYAATGESLPESLDDLDD) are disordered.

The protein belongs to the archaeal NMN adenylyltransferase family.

It localises to the cytoplasm. The enzyme catalyses beta-nicotinamide D-ribonucleotide + ATP + H(+) = diphosphate + NAD(+). It functions in the pathway cofactor biosynthesis; NAD(+) biosynthesis; NAD(+) from nicotinamide D-ribonucleotide: step 1/1. This chain is Nicotinamide-nucleotide adenylyltransferase, found in Haloarcula marismortui (strain ATCC 43049 / DSM 3752 / JCM 8966 / VKM B-1809) (Halobacterium marismortui).